A 702-amino-acid chain; its full sequence is Phosphate acetyltransferase (702 aa).

A phosphate acetyltransferase region spans residues 375-702; sequence AFRYELIQRA…QATQSAADCG (328 aa).

It in the N-terminal section; belongs to the CobB/CobQ family. The protein in the C-terminal section; belongs to the phosphate acetyltransferase and butyryltransferase family. In terms of assembly, homohexamer.

It is found in the cytoplasm. It catalyses the reaction acetyl-CoA + phosphate = acetyl phosphate + CoA. It participates in metabolic intermediate biosynthesis; acetyl-CoA biosynthesis; acetyl-CoA from acetate: step 2/2. Involved in acetate metabolism. The polypeptide is Phosphate acetyltransferase (pta) (Deinococcus radiodurans (strain ATCC 13939 / DSM 20539 / JCM 16871 / CCUG 27074 / LMG 4051 / NBRC 15346 / NCIMB 9279 / VKM B-1422 / R1)).